The primary structure comprises 627 residues: MEEADRILIHSLRQAGTAVPPEVQTLRAFTTELVVEAVVRCLRVINPDVGSGLSHLLPPAMSARFRLAMSLAQACMDLGYPLELGYQNFLYPSEPDLRDLLLFLAERLPTDASEDADQPAGDSAIFLRAIGSQIRDQLALPWVPPLLRTPKVQRLQGSALQQAFHSSRLVLPELNCRGEPREFQASPLLLPAPSQVPQLLGRAASLLEHHAIQLCQHVNRDCPGDEDRVRWASRLPSQEDPRAPQQRLHKQLIEHLRQSWGPLGAPTQVRDLGEMLQAWGAKAMTGVPKGSRFTHSEKFTFHLEPQVQAAQVADIPAASQRPEQDTRAAQEEELESLREQLASVNHNIEEVEANMKSLGMNLVQVETECRQSELSVAEQEQALRLKSRTVELLPDGAANLTKLQLVVESSAQRLIHLASQWEKHRVPLLAEYRHLRKLQDCRELESSRRLVEIQELHQSVRAAAEEARRKEEVYKQLVSELETLPKDVSRLAYTQRILEIVGNIRKQKEEITKILSDTKELQKEINSLSGKLDRTFAVTDELVFKDAKKDDAVRKAYKYLAALHENCSQLIQTIEDTGTIMREVRDLEEQIETEMGKKTLSNLEKICEDYRALRQENAGLLGRVREV.

Positions 1 to 321 (MEEADRILIH…VADIPAASQR (321 aa)) are sufficient for interaction with COMMD1. Positions 1–447 (MEEADRILIH…LQDCRELESS (447 aa)) are sufficicient and required for interaction with CCDC93. Residues 321 to 384 (RPEQDTRAAQ…SVAEQEQALR (64 aa)) are a coiled coil. At serine 410 the chain carries Phosphoserine. A coiled-coil region spans residues 448-535 (RRLVEIQELH…NSLSGKLDRT (88 aa)).

The protein belongs to the CCDC22 family. Component of the commander complex consisting of the CCC subcomplex and the retriever subcomplex. Component of the CCC (COMMD/CCDC22/CCDC93) subcomplex consisting of COMMD1, COMMD2, COMMD3, COMMD4, COMMD5, COMMD6, COMMD7, COMMD8, COMMD9, COMMD10, CCDC22 and CCDC93. Forms a coiled-coil heterodimer with CCDC22; this heterodimer interacts with the guanine nucleotide exchange factor DENND10; the interaction is direct. Interacts with CUL1, CUL2, CUL3, SKP1, BTRC. Interacts with SNX17 and SNX31. Interacts with CPNE1 and CPNE4.

Its subcellular location is the endosome. It localises to the cytoplasm. The protein localises to the cytoskeleton. The protein resides in the microtubule organizing center. It is found in the centrosome. Its function is as follows. Component of the commander complex that is essential for endosomal recycling of transmembrane cargos; the Commander complex is composed of composed of the CCC subcomplex and the retriever subcomplex. Component of the CCC complex, which is involved in the regulation of endosomal recycling of surface proteins, including integrins, signaling receptor and channels. Involved in regulation of NF-kappa-B signaling. Promotes ubiquitination of I-kappa-B-kinase subunit IKBKB and its subsequent proteasomal degradation leading to NF-kappa-B activation; the function may involve association with COMMD8 and a CUL1-dependent E3 ubiquitin ligase complex. May down-regulate NF-kappa-B activity via association with COMMD1 and involving a CUL2-dependent E3 ubiquitin ligase complex. Regulates the cellular localization of COMM domain-containing proteins, such as COMMD1 and COMMD10. Component of the CCC complex, which is involved in the regulation of endosomal recycling of surface proteins, including integrins, signaling receptor and channels. The CCC complex associates with SNX17, retriever and WASH complexes to prevent lysosomal degradation and promote cell surface recycling of numerous cargos such as integrins ITGA5:ITGB1. Plays a role in copper ion homeostasis. Involved in copper-dependent ATP7A trafficking between the trans-Golgi network and vesicles in the cell periphery; the function is proposed to depend on its association within the CCC complex and cooperation with the WASH complex on early endosomes. The sequence is that of Coiled-coil domain-containing protein 22 from Rattus norvegicus (Rat).